The primary structure comprises 137 residues: Large ribosomal subunit protein uL16 (137 aa).

The protein belongs to the universal ribosomal protein uL16 family. As to quaternary structure, part of the 50S ribosomal subunit.

Its function is as follows. Binds 23S rRNA and is also seen to make contacts with the A and possibly P site tRNAs. The sequence is that of Large ribosomal subunit protein uL16 from Agrobacterium fabrum (strain C58 / ATCC 33970) (Agrobacterium tumefaciens (strain C58)).